We begin with the raw amino-acid sequence, 712 residues long: Polyribonucleotide nucleotidyltransferase (712 aa).

Mg(2+)-binding residues include D487 and D493. Residues 554-613 enclose the KH domain; sequence PKIITMTINPDKIRDVIGPSGKQINKIIEETGVKIDIEQDGTVFISSINQEMNDKAKKII. An S1 motif domain is found at 623 to 691; it reads GEIYEGKVKR…KQGRVNLSRK (69 aa).

This sequence belongs to the polyribonucleotide nucleotidyltransferase family. Mg(2+) serves as cofactor.

It is found in the cytoplasm. The enzyme catalyses RNA(n+1) + phosphate = RNA(n) + a ribonucleoside 5'-diphosphate. Involved in mRNA degradation. Catalyzes the phosphorolysis of single-stranded polyribonucleotides processively in the 3'- to 5'-direction. This chain is Polyribonucleotide nucleotidyltransferase, found in Bacillus cereus (strain 03BB102).